We begin with the raw amino-acid sequence, 257 residues long: MWFLVLCLALSLGGTGRAPPIQSRIVGGWECSQPWQAALYHFSTFQCGGILVHPQWVLTAAHCISDNYQLWLGRHNLFDDEDTAQFVHVSESFPHPGFNMSLLKNHTRQADDYSHDLMLLRLTQPAEITDAVQVVELPTQEPEVGSTCLASGWGSIEPENFSFPDDLQCVDLEILPNDECAKAHTQKVTEFMLCAGHLEGGKDTCVGDSGGPLTCDGVLQGVTSWGYIPCGSPNKPAVFVKVLSYVKWIEDTIAENS.

The first 18 residues, 1-18 (MWFLVLCLALSLGGTGRA), serve as a signal peptide directing secretion. Positions 19 to 24 (PPIQSR) are cleaved as a propeptide — activation peptide. The Peptidase S1 domain occupies 25 to 254 (IVGGWECSQP…YVKWIEDTIA (230 aa)). 5 cysteine pairs are disulfide-bonded: Cys-31-Cys-169, Cys-47-Cys-63, Cys-148-Cys-215, Cys-180-Cys-194, and Cys-205-Cys-230. His-62 serves as the catalytic Charge relay system. O-linked (GalNAc...) serine glycosylation is present at Ser-90. N-linked (GlcNAc...) asparagine glycosylation occurs at Asn-99. Ser-101 carries an O-linked (GalNAc...) serine glycan. Asn-105 carries an N-linked (GlcNAc...) asparagine glycan. Catalysis depends on Asp-116, which acts as the Charge relay system. The N-linked (GlcNAc...) asparagine glycan is linked to Asn-160. The O-linked (GalNAc...) serine glycan is linked to Ser-162. The Charge relay system role is filled by Ser-209.

This sequence belongs to the peptidase S1 family. Kallikrein subfamily.

It carries out the reaction Preferential cleavage of Arg-|-Xaa bonds in small molecule substrates. Highly selective action to release kallidin (lysyl-bradykinin) from kininogen involves hydrolysis of Met-|-Xaa or Leu-|-Xaa.. Functionally, glandular kallikreins cleave Met-Lys and Arg-Ser bonds in kininogen to release Lys-bradykinin. The sequence is that of Kallikrein-1 (KLK1) from Macaca fascicularis (Crab-eating macaque).